The sequence spans 336 residues: tRNA N6-adenosine threonylcarbamoyltransferase (336 aa).

Positions 114 and 118 each coordinate Fe cation. Substrate-binding positions include 136–140 (LVSGG), Asp-169, Gly-182, Asp-186, and Asn-275. Asp-301 lines the Fe cation pocket.

Belongs to the KAE1 / TsaD family. Fe(2+) serves as cofactor.

Its subcellular location is the cytoplasm. The catalysed reaction is L-threonylcarbamoyladenylate + adenosine(37) in tRNA = N(6)-L-threonylcarbamoyladenosine(37) in tRNA + AMP + H(+). Functionally, required for the formation of a threonylcarbamoyl group on adenosine at position 37 (t(6)A37) in tRNAs that read codons beginning with adenine. Is involved in the transfer of the threonylcarbamoyl moiety of threonylcarbamoyl-AMP (TC-AMP) to the N6 group of A37, together with TsaE and TsaB. TsaD likely plays a direct catalytic role in this reaction. This chain is tRNA N6-adenosine threonylcarbamoyltransferase, found in Streptococcus pneumoniae (strain P1031).